We begin with the raw amino-acid sequence, 76 residues long: Probable insulin-like peptide alpha-type 3 (76 aa).

The signal sequence occupies residues 1 to 18 (MFVLLIILSIILAQVTDA). Cystine bridges form between C28–C58, C40–C71, and C46–C72.

It belongs to the insulin family.

It is found in the secreted. The protein is Probable insulin-like peptide alpha-type 3 (ins-23) of Caenorhabditis elegans.